A 262-amino-acid polypeptide reads, in one-letter code: Aquaporin TIP3-1 (262 aa).

Transmembrane regions (helical) follow at residues 27-47 (AAIS…GSVL) and 61-81 (GLVA…AVAV). The NPA 1 motif lies at 89-91 (NPA). A run of 3 helical transmembrane segments spans residues 104–124 (LVRA…ATLL), 148–168 (AVLL…ATVI), and 175–195 (VGTI…LAGG). Positions 203–205 (NPA) match the NPA 2 motif. A helical membrane pass occupies residues 223-243 (YWLGPFLGAGLAGLVYEYLVI).

It belongs to the MIP/aquaporin (TC 1.A.8) family. TIP (TC 1.A.8.10) subfamily.

It localises to the vacuole membrane. Its function is as follows. Aquaporins facilitate the transport of water and small neutral solutes across cell membranes. In Zea mays (Maize), this protein is Aquaporin TIP3-1 (TIP3-1).